Consider the following 424-residue polypeptide: Histidine--tRNA ligase (424 aa).

This sequence belongs to the class-II aminoacyl-tRNA synthetase family. As to quaternary structure, homodimer.

Its subcellular location is the cytoplasm. The catalysed reaction is tRNA(His) + L-histidine + ATP = L-histidyl-tRNA(His) + AMP + diphosphate + H(+). In Sodalis glossinidius (strain morsitans), this protein is Histidine--tRNA ligase.